The chain runs to 227 residues: Phosphoribosylformylglycinamidine synthase subunit PurQ (227 aa).

The Glutamine amidotransferase type-1 domain maps to 2-226; the sequence is KFAVIQFPGS…VKAWKEEQVN (225 aa). Cys86 functions as the Nucleophile in the catalytic mechanism. Catalysis depends on residues His195 and Glu197.

As to quaternary structure, part of the FGAM synthase complex composed of 1 PurL, 1 PurQ and 2 PurS subunits.

The protein localises to the cytoplasm. It catalyses the reaction N(2)-formyl-N(1)-(5-phospho-beta-D-ribosyl)glycinamide + L-glutamine + ATP + H2O = 2-formamido-N(1)-(5-O-phospho-beta-D-ribosyl)acetamidine + L-glutamate + ADP + phosphate + H(+). The enzyme catalyses L-glutamine + H2O = L-glutamate + NH4(+). The protein operates within purine metabolism; IMP biosynthesis via de novo pathway; 5-amino-1-(5-phospho-D-ribosyl)imidazole from N(2)-formyl-N(1)-(5-phospho-D-ribosyl)glycinamide: step 1/2. Part of the phosphoribosylformylglycinamidine synthase complex involved in the purines biosynthetic pathway. Catalyzes the ATP-dependent conversion of formylglycinamide ribonucleotide (FGAR) and glutamine to yield formylglycinamidine ribonucleotide (FGAM) and glutamate. The FGAM synthase complex is composed of three subunits. PurQ produces an ammonia molecule by converting glutamine to glutamate. PurL transfers the ammonia molecule to FGAR to form FGAM in an ATP-dependent manner. PurS interacts with PurQ and PurL and is thought to assist in the transfer of the ammonia molecule from PurQ to PurL. This is Phosphoribosylformylglycinamidine synthase subunit PurQ from Listeria monocytogenes serotype 4a (strain HCC23).